The chain runs to 355 residues: F-box only protein 32 (355 aa).

Residues 62–67 (KKRKKD) carry the Nuclear localization signal motif. A Nuclear export signal motif is present at residues 169 to 173 (LLQTL). Positions 223 to 271 (LTFTDLPLCLQLNIMQRLSDGRDLVSLGQVAPDLHVLSEDRLLWKKLCQ) constitute an F-box domain. A Bipartite nuclear localization signal motif is present at residues 280 to 295 (RKRLILSDKGQLDWKK).

As to quaternary structure, part of the SCF (SKP1-CUL1-F-box) E3 ubiquitin-protein ligase complex SCF(FBXO32) formed of CUL1, SKP1, RBX1 and FBXO32.

The protein resides in the cytoplasm. It localises to the nucleus. Its pathway is protein modification; protein ubiquitination. Its function is as follows. Substrate recognition component of a SCF (SKP1-CUL1-F-box protein) E3 ubiquitin-protein ligase complex which mediates the ubiquitination and subsequent proteasomal degradation of target proteins. Probably recognizes and binds to phosphorylated target proteins during skeletal muscle atrophy. Recognizes TERF1. This Bos taurus (Bovine) protein is F-box only protein 32 (FBXO32).